A 673-amino-acid polypeptide reads, in one-letter code: Polyadenylate-binding protein, cytoplasmic and nuclear (673 aa).

The disordered stretch occupies residues 1–39 (MSAETATSPAPAAETPVAPAPATQTTPAEGAPTPAAAAP). RRM domains lie at 46 to 124 (ASLY…WSQR), 134 to 211 (GNIF…HHVG), 227 to 304 (TNVY…RAQT), and 330 to 407 (VNLY…LAQR). The tract at residues 300–322 (GRAQTKSEREAELKKSHEEKRLE) is disordered. Basic and acidic residues predominate over residues 304 to 322 (TKSEREAELKKSHEEKRLE). Disordered regions lie at residues 509 to 572 (APGY…AGRL) and 644 to 673 (WGKD…EKKE). Residues 569–646 (AGRLDAQSLA…ALRVLAEWGK (78 aa)) form the PABC domain.

Belongs to the polyadenylate-binding protein type-1 family.

The protein localises to the cytoplasm. It is found in the nucleus. Functionally, binds the poly(A) tail of mRNA. Appears to be an important mediator of the multiple roles of the poly(A) tail in mRNA biogenesis, stability and translation. In the nucleus, involved in both mRNA cleavage and polyadenylation. Is also required for efficient mRNA export to the cytoplasm. Acts in concert with a poly(A)-specific nuclease (PAN) to affect poly(A) tail shortening, which may occur concomitantly with either nucleocytoplasmic mRNA transport or translational initiation. In the cytoplasm, stimulates translation initiation and regulates mRNA decay through translation termination-coupled poly(A) shortening, probably mediated by PAN. This chain is Polyadenylate-binding protein, cytoplasmic and nuclear (PAB1), found in Cryptococcus neoformans var. neoformans serotype D (strain B-3501A) (Filobasidiella neoformans).